We begin with the raw amino-acid sequence, 648 residues long: PAN2-PAN3 deadenylation complex subunit PAN3 (648 aa).

Residues Met-1–Glu-24 are disordered. Residues Glu-24–Asn-53 form a C3H1-type zinc finger. Residues Gln-244–Ala-506 are pseudokinase domain. ATP-binding positions include Arg-295, Asp-345 to Thr-352, and Ser-404 to Lys-405. Residues Thr-507–Thr-545 are a coiled coil. Residues Ile-546 to Asn-648 form a knob domain region.

It belongs to the protein kinase superfamily. PAN3 family. As to quaternary structure, homodimer. Forms a heterotrimer with a catalytic subunit PAN2 to form the poly(A)-nuclease (PAN) deadenylation complex. Interacts (via PAM-2 motif) with poly(A)-binding protein PAB1 (via PABC domain), conferring substrate specificity of the enzyme complex.

It localises to the cytoplasm. Regulatory subunit of the poly(A)-nuclease (PAN) deadenylation complex, one of two cytoplasmic mRNA deadenylases involved in mRNA turnover. PAN specifically shortens poly(A) tails of RNA and the activity is stimulated by poly(A)-binding protein PAB1. PAN deadenylation is followed by rapid degradation of the shortened mRNA tails by the CCR4-NOT complex. Deadenylated mRNAs are then degraded by two alternative mechanisms, namely exosome-mediated 3'-5' exonucleolytic degradation, or deadenylation-dependent mRNA decaping and subsequent 5'-3' exonucleolytic degradation by XRN1. May also be involved in post-transcriptional maturation of mRNA poly(A) tails. PAN3 acts as a positive regulator for PAN activity, recruiting the catalytic subunit PAN2 to mRNA via its interaction with RNA and with PAB1. This Chaetomium globosum (strain ATCC 6205 / CBS 148.51 / DSM 1962 / NBRC 6347 / NRRL 1970) (Soil fungus) protein is PAN2-PAN3 deadenylation complex subunit PAN3.